The primary structure comprises 334 residues: ABC transporter L-arabinose-binding periplasmic protein (334 aa).

A signal peptide spans 1-30; it reads MNRTIRRHTLRALLAALCIAPLGMQGAARA.

This sequence belongs to the bacterial solute-binding protein 2 family. In terms of assembly, the complex is composed of two ATP-binding proteins (AraG), two transmembrane proteins (AraH) and a solute-binding protein (AraF).

It localises to the periplasm. In terms of biological role, part of the ABC transporter complex AraFGH involved in L-arabinose import. Binds with high affinity to L-arabinose. The chain is ABC transporter L-arabinose-binding periplasmic protein (araF) from Azospirillum brasilense.